The chain runs to 517 residues: Beclin-1-like protein (517 aa).

Positions 76 to 106 (LPRHKPPQSQGIPPRPRGASSPQPDATQSGK) are disordered. The span at 95 to 105 (SSPQPDATQSG) shows a compositional bias: polar residues. A coiled-coil region spans residues 172-266 (CLECMRVLSD…NRFNELEDRY (95 aa)).

Belongs to the beclin family. Component of a phosphatidylinositol 3-kinase (PI3K) complex composed of ATG6, SH3P2 and FREE1. Interacts with SINAT1, SINAT2, SINAT5, SINAT6, TRAF1A and TRAF1B. Interacts with TUBB8/TUB8. Component of a complex made of VPS38/USL1 and PI3K main subunits such as VPS15, ATG6/VPS30 and VPS34. Binds directly to VPS38/USL1. In terms of processing, ubiquitinated. The interaction with SINAT1 or SINAT2, and the presence of TRAF1A/MUSE14 and TRAF1B/MUSE13, mediates its proteasome-dependent degradation. In terms of tissue distribution, highly expressed in mature pollen grains. Expressed in roots, leaves, stems, flowers and siliques.

Its subcellular location is the cytoplasm. The protein localises to the cytoskeleton. Its function is as follows. Required for normal plant development. Required for pollen germination. Required for autophagic activity. Required to limit the pathogen-associated cell death response. May be involved in vacuolar protein sorting. Binds to microtubules. May facilitate efficient recruitment of other ATG proteins to assemble scaffolds for autophagosome biogenesis. The sequence is that of Beclin-1-like protein from Arabidopsis thaliana (Mouse-ear cress).